Consider the following 319-residue polypeptide: Acetyl-coenzyme A carboxylase carboxyl transferase subunit alpha (319 aa).

The CoA carboxyltransferase C-terminal domain maps to 35 to 296 (DLDKEIEQLE…KDMLVKQLEE (262 aa)).

Belongs to the AccA family. In terms of assembly, acetyl-CoA carboxylase is a heterohexamer composed of biotin carboxyl carrier protein (AccB), biotin carboxylase (AccC) and two subunits each of ACCase subunit alpha (AccA) and ACCase subunit beta (AccD).

It localises to the cytoplasm. It catalyses the reaction N(6)-carboxybiotinyl-L-lysyl-[protein] + acetyl-CoA = N(6)-biotinyl-L-lysyl-[protein] + malonyl-CoA. The protein operates within lipid metabolism; malonyl-CoA biosynthesis; malonyl-CoA from acetyl-CoA: step 1/1. In terms of biological role, component of the acetyl coenzyme A carboxylase (ACC) complex. First, biotin carboxylase catalyzes the carboxylation of biotin on its carrier protein (BCCP) and then the CO(2) group is transferred by the carboxyltransferase to acetyl-CoA to form malonyl-CoA. In Vibrio atlanticus (strain LGP32) (Vibrio splendidus (strain Mel32)), this protein is Acetyl-coenzyme A carboxylase carboxyl transferase subunit alpha.